The chain runs to 337 residues: Anthranilate phosphoribosyltransferase (337 aa).

Residues glycine 81, 84 to 85 (GD), serine 89, 91 to 94 (NVST), 109 to 117 (KHGNRAASS), and alanine 121 each bind 5-phospho-alpha-D-ribose 1-diphosphate. Glycine 81 is an anthranilate binding site. A Mg(2+)-binding site is contributed by serine 93. Asparagine 112 provides a ligand contact to anthranilate. Arginine 167 lines the anthranilate pocket. Mg(2+)-binding residues include aspartate 226 and glutamate 227.

It belongs to the anthranilate phosphoribosyltransferase family. In terms of assembly, homodimer. It depends on Mg(2+) as a cofactor.

It catalyses the reaction N-(5-phospho-beta-D-ribosyl)anthranilate + diphosphate = 5-phospho-alpha-D-ribose 1-diphosphate + anthranilate. The protein operates within amino-acid biosynthesis; L-tryptophan biosynthesis; L-tryptophan from chorismate: step 2/5. Its function is as follows. Catalyzes the transfer of the phosphoribosyl group of 5-phosphorylribose-1-pyrophosphate (PRPP) to anthranilate to yield N-(5'-phosphoribosyl)-anthranilate (PRA). This Methylobacterium nodulans (strain LMG 21967 / CNCM I-2342 / ORS 2060) protein is Anthranilate phosphoribosyltransferase.